A 286-amino-acid chain; its full sequence is ATP synthase gamma chain (286 aa).

The protein belongs to the ATPase gamma chain family. F-type ATPases have 2 components, CF(1) - the catalytic core - and CF(0) - the membrane proton channel. CF(1) has five subunits: alpha(3), beta(3), gamma(1), delta(1), epsilon(1). CF(0) has three main subunits: a, b and c.

Its subcellular location is the cell inner membrane. Functionally, produces ATP from ADP in the presence of a proton gradient across the membrane. The gamma chain is believed to be important in regulating ATPase activity and the flow of protons through the CF(0) complex. This is ATP synthase gamma chain from Shewanella loihica (strain ATCC BAA-1088 / PV-4).